Reading from the N-terminus, the 67-residue chain is Conotoxin AbVIN (67 aa).

The first 17 residues, 1-17, serve as a signal peptide directing secretion; the sequence is VIIIAVLFLTACQLIAT. The propeptide occupies 18-40; the sequence is ASYARSERKHPDLRLSSRNSKLS. Intrachain disulfides connect C43-C57, C50-C61, and C56-C66.

This sequence belongs to the conotoxin O1 superfamily. Expressed by the venom duct.

The protein resides in the secreted. In Conus abbreviatus (Abbreviated cone), this protein is Conotoxin AbVIN.